We begin with the raw amino-acid sequence, 78 residues long: HssA/B-like protein 29 (78 aa).

A disordered region spans residues 1-31 (MTLFSSITSISKTNTSSKSSLNSFSGSSLSM).

This sequence belongs to the hssA/B family.

The polypeptide is HssA/B-like protein 29 (hssl29) (Dictyostelium discoideum (Social amoeba)).